The sequence spans 493 residues: Lysine--tRNA ligase (493 aa).

Mg(2+)-binding residues include E406 and E413.

This sequence belongs to the class-II aminoacyl-tRNA synthetase family. In terms of assembly, homodimer. Requires Mg(2+) as cofactor.

It localises to the cytoplasm. The enzyme catalyses tRNA(Lys) + L-lysine + ATP = L-lysyl-tRNA(Lys) + AMP + diphosphate. The sequence is that of Lysine--tRNA ligase from Leuconostoc citreum (strain KM20).